A 113-amino-acid chain; its full sequence is Small ribosomal subunit protein bS6 (113 aa).

Belongs to the bacterial ribosomal protein bS6 family.

Its function is as follows. Binds together with bS18 to 16S ribosomal RNA. In Synechocystis sp. (strain ATCC 27184 / PCC 6803 / Kazusa), this protein is Small ribosomal subunit protein bS6 (rpsF).